The following is a 699-amino-acid chain: Triacylglycerol hydrolase DDHD2 (699 aa).

The segment covering 1-11 has biased composition (polar residues); that stretch reads MSSGESHQEQL. Residues 1–25 are disordered; that stretch reads MSSGESHQEQLSQSDPSPSPNSCSS. Residues 12 to 25 are compositionally biased toward low complexity; that stretch reads SQSDPSPSPNSCSS. One can recognise a WWE domain in the interval 30-112; it reads DMDASSSYEP…WDELPSEVRR (83 aa). Ser351 serves as the catalytic Nucleophile. Residues 383-445 enclose the SAM domain; it reads DRGDASTLEE…KILNHFSARK (63 aa). A Phosphoserine modification is found at Ser447. One can recognise a DDHD domain in the interval 484-688; it reads LNYKPEIFFA…VLLVLKEIYQ (205 aa). Positions 599 to 635 are disordered; the sequence is QASETAEETEAEPESSSEKSNEANTEEPPVEVKEEAP. A compositionally biased stretch (acidic residues) spans 603–613; it reads TAEETEAEPES.

Belongs to the PA-PLA1 family. Forms homooligomers and, to a much smaller extent, heterooligomers with DDHD1.

It localises to the cytoplasm. It is found in the cytosol. The protein resides in the endoplasmic reticulum-Golgi intermediate compartment. The protein localises to the golgi apparatus. Its subcellular location is the cis-Golgi network. It carries out the reaction a triacylglycerol + H2O = a diacylglycerol + a fatty acid + H(+). The catalysed reaction is a diacylglycerol + H2O = a monoacylglycerol + a fatty acid + H(+). The enzyme catalyses a 1,3-diacylglycerol + H2O = a 1-acylglycerol + a fatty acid + H(+). It catalyses the reaction a 1-acylglycerol + H2O = glycerol + a fatty acid + H(+). It carries out the reaction 1,2,3-tri-(9Z-octadecenoyl)-glycerol + H2O = di-(9Z)-octadecenoylglycerol + (9Z)-octadecenoate + H(+). The catalysed reaction is di-(9Z)-octadecenoylglycerol + H2O = (9Z-octadecenoyl)-glycerol + (9Z)-octadecenoate + H(+). The enzyme catalyses 1,3-di-(9Z-octadecenoyl)-glycerol + H2O = 1-(9Z-octadecenoyl)-glycerol + (9Z)-octadecenoate + H(+). It catalyses the reaction trihexadecanoylglycerol + H2O = dihexadecanoylglycerol + hexadecanoate + H(+). It carries out the reaction 1,2-di-(9Z-octadecenoyl)-sn-glycero-3-phosphocholine + H2O = (9Z-octadecenoyl)-sn-glycero-3-phosphocholine + (9Z)-octadecenoate + H(+). The catalysed reaction is 1-(9Z-octadecenoyl)-glycerol + H2O = glycerol + (9Z)-octadecenoate + H(+). The enzyme catalyses 1,2-di-(9Z-octadecenoyl)-sn-glycero-3-phosphate + H2O = 2-(9Z-octadecenoyl)-sn-glycero-3-phosphate + (9Z)-octadecenoate + H(+). It catalyses the reaction 1-hexadecanoyl-2-(9Z-octadecenoyl)-sn-glycero-3-phosphate + H2O = 2-(9Z-octadecenoyl)-sn-glycero-3-phosphate + hexadecanoate + H(+). It carries out the reaction 1-hexadecanoyl-2-(9Z-octadecenoyl)-sn-glycero-3-phosphoethanolamine + H2O = 2-(9Z-octadecenoyl)-sn-glycero-3-phosphoethanolamine + hexadecanoate + H(+). The catalysed reaction is 1-hexadecanoyl-2-(9Z-octadecenoyl)-sn-glycero-3-phospho-L-serine + H2O = 2-(9Z-octadecenoyl)-sn-glycero-3-phospho-L-serine + hexadecanoate + H(+). The enzyme catalyses 1-hexadecanoyl-2-(9Z-octadecenoyl)-sn-glycero-3-phosphocholine + H2O = 2-(9Z-octadecenoyl)-sn-glycero-3-phosphocholine + hexadecanoate + H(+). Its function is as follows. Diacylglycerol (DAG) and triacylglycerol (TAG) lipase that is required for proper lipid homeostasis in the central nervous system. It cooperates with PNPLA2/ATGL in neuronal TAG catabolism and hydrolyzes sn-1,3-DAG downstream of PNPLA2/ATGL. In vitro, also acts as a phospholipase that hydrolyzes preferentially phosphatidic acids, including 1,2-dioleoyl-sn-phosphatidic acid, phosphatidylcholine and phosphatidylethanolamine. Specifically binds to phosphatidylinositol 3-phosphate (PI(3)P), phosphatidylinositol 4-phosphate (PI(4)P), phosphatidylinositol 5-phosphate (PI(5)P) and possibly phosphatidylinositol 4,5-bisphosphate (PI(4,5)P2). May be involved in the maintenance of the endoplasmic reticulum and/or Golgi structures. May regulate the transport between Golgi apparatus and plasma membrane. The polypeptide is Triacylglycerol hydrolase DDHD2 (Mus musculus (Mouse)).